Here is a 1050-residue protein sequence, read N- to C-terminus: Self-sufficient cytochrome P450 monooxygenase CYP505E5 (1050 aa).

Heme is bound at residue cysteine 405. Residues arginine 467–aspartate 491 are disordered. One can recognise a Flavodoxin-like domain in the interval valine 500 to leucine 641. FMN is bound by residues serine 506–threonine 510 and valine 585–alanine 617. The FAD-binding FR-type domain maps to lysine 679–proline 907.

In the N-terminal section; belongs to the cytochrome P450 family. It depends on FAD as a cofactor. FMN is required as a cofactor. The cofactor is heme.

It carries out the reaction 2 oxidized [cytochrome P450] + NADPH = 2 reduced [cytochrome P450] + NADP(+) + H(+). It catalyses the reaction an organic molecule + reduced [NADPH--hemoprotein reductase] + O2 = an alcohol + oxidized [NADPH--hemoprotein reductase] + H2O + H(+). The catalysed reaction is dodecanoate + reduced [NADPH--hemoprotein reductase] + O2 = 5-hydroxydodecanoate + oxidized [NADPH--hemoprotein reductase] + H2O + H(+). The enzyme catalyses tetradecanoate + reduced [NADPH--hemoprotein reductase] + O2 = 7-hydroxytetradecanoate + oxidized [NADPH--hemoprotein reductase] + H2O + H(+). It carries out the reaction dodecan-1-ol + reduced [NADPH--hemoprotein reductase] + O2 = 1,5-dodecanediol + oxidized [NADPH--hemoprotein reductase] + H2O + H(+). It catalyses the reaction dodecan-1-ol + reduced [NADPH--hemoprotein reductase] + O2 = 1,4-dodecanediol + oxidized [NADPH--hemoprotein reductase] + H2O + H(+). The catalysed reaction is dodecan-1-ol + reduced [NADPH--hemoprotein reductase] + O2 = 1,6-dodecanediol + oxidized [NADPH--hemoprotein reductase] + H2O + H(+). Its function is as follows. Self-sufficient cytochrome P450 monooxygenase that catalyzes the regioselective in-chain hydroxylation of alkanes, fatty alcohols, and fatty acids at the omega-7 position. Performs hydroxylation of C10-C16 n-alkanes and C12 and C14 fatty alcohols; and thereby enables the one step biocatalytic synthesis of rare alcohols such as 5-dodecanol and 7-tetradecanol. Converts 1-dodecanol into 1,5-dodecanediol as major product with very little sub-terminally hydroxylated products with the 1,4-dodecanediol and 1,6-dodecanediol more abundant. Converts dodecanoic acid to 5-hydroxydodecanoic acid which can be further converted into delta-dodecalactone by lactonization of the 5-hydroxy acid at low pH. Also gives sub-terminal hydroxylation of dodecanoic acid with 9-hydroxydodecanoic acid being the second most abundant product. The sequence is that of Self-sufficient cytochrome P450 monooxygenase CYP505E5 from Aspergillus niger.